Consider the following 287-residue polypeptide: 4-hydroxybenzoate octaprenyltransferase (287 aa).

The next 6 helical transmembrane spans lie at 23-40, 98-118, 141-161, 163-183, 213-233, and 235-255; these read IGSL…WLAG, ILFV…NKMT, LPQF…YAAV, ESLP…TVAY, IIIG…GNIT, and LGIP…YQQI.

Belongs to the UbiA prenyltransferase family. Mg(2+) serves as cofactor.

It localises to the cell inner membrane. The catalysed reaction is all-trans-octaprenyl diphosphate + 4-hydroxybenzoate = 4-hydroxy-3-(all-trans-octaprenyl)benzoate + diphosphate. It functions in the pathway cofactor biosynthesis; ubiquinone biosynthesis. Functionally, catalyzes the prenylation of para-hydroxybenzoate (PHB) with an all-trans polyprenyl group. Mediates the second step in the final reaction sequence of ubiquinone-8 (UQ-8) biosynthesis, which is the condensation of the polyisoprenoid side chain with PHB, generating the first membrane-bound Q intermediate 3-octaprenyl-4-hydroxybenzoate. This chain is 4-hydroxybenzoate octaprenyltransferase, found in Pectobacterium atrosepticum (strain SCRI 1043 / ATCC BAA-672) (Erwinia carotovora subsp. atroseptica).